Here is a 418-residue protein sequence, read N- to C-terminus: Ceramide synthase LAC1 (418 aa).

Positions 1–14 (MSTIKPSPSNNNLK) are enriched in polar residues. Residues 1-25 (MSTIKPSPSNNNLKVRSRPRRKSSI) form a disordered region. Residue S2 is modified to N-acetylserine. Residues 2–81 (STIKPSPSNN…WFSFREISYR (80 aa)) are Cytoplasmic-facing. A compositionally biased stretch (basic residues) spans 15 to 24 (VRSRPRRKSS). A phosphoserine mark is found at S23 and S24. The helical transmembrane segment at 82-102 (HAWIAPLMILIAVYSAYFTSG) threads the bilayer. N103 is a glycosylation site (N-linked (GlcNAc...) asparagine). Residues 103–130 (NTTKTNVLHRFVAVSYQIGDTNAYGKGI) are Lumenal-facing. Residues 131–155 (NDLCFVFYYMIFFTFLREFLMDVVI) traverse the membrane as a helical segment. The Cytoplasmic segment spans residues 156–172 (RPFAIRLHVTSKHRIKR). The region spanning 168–385 (HRIKRIMEQM…FRVLYRILWR (218 aa)) is the TLC domain. The fumonisin B1 site is built by R169, R172, and Y182. A helical transmembrane segment spans residues 173-194 (IMEQMYAIFYTGVSGPFGIYCM). The Lumenal portion of the chain corresponds to 195–217 (YHSDLWFFNTKAMYRTYPDFTNP). Residues 218-240 (FLFKVFYLGQAAFWAQQACILVL) form a helical membrane-spanning segment. Positions 224 and 231 each coordinate hexacosanoate. A fumonisin B1-binding site is contributed by W231. W231 is a binding site for hexacosanoyl-CoA. The Cytoplasmic portion of the chain corresponds to 241 to 249 (QLEKPRKDH). Residues 250–268 (NELTFHHIVTLLLIWSSYV) traverse the membrane as a helical segment. A fumonisin B1-binding site is contributed by H255. Residues H255, T259, L262, I263, S265, S266, F269, F271, M274, G275, I278, Y279, M282, D283, and D286 each coordinate hexacosanoate. Hexacosanoyl-CoA-binding residues include H255, T259, and L262. Hexacosanoyl-CoA contacts are provided by S265 and S266. Topologically, residues 269–273 (FHFTK) are lumenal. The hexacosanoyl-CoA site is built by F271, M274, G275, I278, Y279, and M282. A helical membrane pass occupies residues 274 to 295 (MGLPIYITMDVSDFLLSFSKTL). Residues D286, L289, K293, N296, Y297, A303, F304, F307, and W314 each contribute to the fumonisin B1 site. 4 residues coordinate hexacosanoyl-CoA: D286, L289, K293, and N296. The Cytoplasmic portion of the chain corresponds to 296 to 305 (NYLDSGLAFF). The chain crosses the membrane as a helical span at residues 306 to 334 (SFAIFVVAWIYLRHYINLKILWSVLTQFR). F307 lines the hexacosanoyl-CoA pocket. Hexacosanoate-binding residues include R318, F343, Y348, I352, S353, I356, V357, L360, I361, and W371. R318 is a hexacosanoyl-CoA binding site. The Lumenal segment spans residues 335–353 (TEGNYVLNFATQQYKCWIS). The hexacosanoyl-CoA site is built by Y348, I352, S353, I356, V357, and L360. The helical transmembrane segment at 354–382 (LPIVFVLIGALQLVNLYWLFLIFRVLYRI) threads the bilayer. Fumonisin B1 is bound by residues W371, I375, V378, I382, and R385. W371 lines the hexacosanoyl-CoA pocket. At 383–418 (LWRGILKDDRSDSESDEESDESSTTPTDSTPTKKDI) the chain is on the cytoplasmic side. Residues 390–418 (DDRSDSESDEESDESSTTPTDSTPTKKDI) form a disordered region.

Belongs to the sphingosine N-acyltransferase family. As to quaternary structure, component of the ceramide synthase complex composed of at least LAC1, LAG1 and LIP1. Forms a heterotetrameric complex, where one unit of the LIP1 homodimer interacts with LAC1 and the other with either LAC1 or LAG1. Post-translationally, phosphorylated; phosphorylation is induced upon disruption of sphingolipid synthesis. Phosphorylation is inhibited by exogenous addition of phytosphingosine.

The protein localises to the endoplasmic reticulum membrane. The catalysed reaction is a very long-chain fatty acyl-CoA + a sphingoid base = an N-(very-long-chain fatty acyl)-sphingoid base + CoA + H(+). It catalyses the reaction hexacosanoyl-CoA + sphinganine = N-hexacosanoylsphinganine + CoA + H(+). It carries out the reaction eicosanoyl-CoA + sphinganine = N-eicosanoylsphinganine + CoA + H(+). The enzyme catalyses a fatty acyl-CoA + sphinganine = an N-acylsphinganine + CoA + H(+). The catalysed reaction is (4R)-hydroxysphinganine + a fatty acyl-CoA = an N-acyl-(4R)-4-hydroxysphinganine + CoA + H(+). It participates in lipid metabolism; sphingolipid metabolism. Its activity is regulated as follows. As part of the ceramide synthase complex, inhibited by the sphinganine analog mycotoxin, fumonisin B1 (FB1). Activated by ACB1, as part of the ceramide synthase complex. Component of the ceramide synthase complex that catalyzes the transfer of the acyl chain from acyl-CoA to a sphingoid base, with high selectivity toward hexacosanoyl-CoA (C26:0-CoA). N-acylates sphinganine and phytosphingosine bases to form dihydroceramides and phytoceramides, respectively. Redundant with LAG1. Facilitates ER-to-Golgi transport of GPI-anchored proteins. Has a lower affinity for phytosphingosine (PHS) than dihydrosphingosine (DHS); PHS is required for the synthesis of phytoceramides and the formation of nuclear envelopes. Along with LAG1, plays a role in pheromone-induced MAP kinase-activation of mating and formation of diploid cells. May also play a role, together with LAG1, in the polarized membrane distribution of phosphatidylinositol 4,5 biphosphate required for STE5 localization to the plasma membrane. The sequence is that of Ceramide synthase LAC1 (LAC1) from Saccharomyces cerevisiae (strain ATCC 204508 / S288c) (Baker's yeast).